Reading from the N-terminus, the 346-residue chain is Hydroxyproline O-galactosyltransferase HPGT3 (346 aa).

Residues 1–10 (MESLPTTVPS) are compositionally biased toward polar residues. A disordered region spans residues 1–21 (MESLPTTVPSKSERRARSSKF). At 1–28 (MESLPTTVPSKSERRARSSKFSQSSSKP) the chain is on the cytoplasmic side. Residues 29-45 (SVIMAFFSCVAWLYVAG) form a helical; Signal-anchor for type II membrane protein membrane-spanning segment. Residues 46 to 346 (RLWQDAENRV…IRQDKVCSVA (301 aa)) lie on the Lumenal side of the membrane.

It belongs to the glycosyltransferase 31 family. The cofactor is Mn(2+). In terms of tissue distribution, expressed in roots, rosette leaves, cauline leaves, stems, flowers and siliques.

It is found in the golgi apparatus membrane. The protein operates within protein modification; protein glycosylation. In terms of biological role, possesses hydroxyproline O-galactosyltransferase activity. Transfers galactose from UDP-galactose to hydroxyproline residues in the arabinogalactan proteins (AGPs). Is specific for AGPs containing non-contiguous peptidyl hydroxyproline residues. The addition of galactose onto the peptidyl hydroxyproline residues in AGP core proteins represents the first committed step in arabinogalactan polysaccharide addition. AGP glycans play essential roles in both vegetative and reproductive plant growth. The chain is Hydroxyproline O-galactosyltransferase HPGT3 from Arabidopsis thaliana (Mouse-ear cress).